The chain runs to 183 residues: Adenylate kinase (183 aa).

12–17 provides a ligand contact to ATP; sequence GAGKGT. The segment at 32–61 is NMP; sequence STGDLLRAEVSAGSALGQEAESVMNRGELV. AMP contacts are provided by residues threonine 33, arginine 38, 59–61, 86–89, and glutamine 93; these read ELV and GFPR. The interval 127-133 is LID; it reads SRGRDDD. Position 128 (arginine 128) interacts with ATP. The AMP site is built by arginine 130 and arginine 141. Glycine 169 contributes to the ATP binding site.

The protein belongs to the adenylate kinase family. As to quaternary structure, monomer.

It localises to the cytoplasm. The enzyme catalyses AMP + ATP = 2 ADP. It participates in purine metabolism; AMP biosynthesis via salvage pathway; AMP from ADP: step 1/1. Its function is as follows. Catalyzes the reversible transfer of the terminal phosphate group between ATP and AMP. Plays an important role in cellular energy homeostasis and in adenine nucleotide metabolism. The protein is Adenylate kinase of Synechococcus sp. (strain CC9311).